Here is a 231-residue protein sequence, read N- to C-terminus: Cuticlin 2 (231 aa).

A signal peptide spans 1-16; the sequence is MQKLIVFFTTIAAAQA. 12 repeat units span residues 75 to 78, 79 to 82, 90 to 93, 105 to 108, 114 to 117, 121 to 124, 137 to 140, 153 to 156, 169 to 172, 192 to 195, 208 to 211, and 218 to 221. Residues 75 to 221 form a 12 X 4 AA repeats of A-A-P-[AVI] region; it reads AAPIAAPAGG…AGGYQAAAPA (147 aa).

In terms of processing, tyrosine residues can be cross-linked in vitro, leading to the formation of insoluble high molecular-weight complexes.

The protein localises to the secreted. In terms of biological role, component of the insoluble part of the cuticles. This Caenorhabditis elegans protein is Cuticlin 2.